Reading from the N-terminus, the 129-residue chain is Iron-sulfur cluster assembly 1 homolog, mitochondrial (129 aa).

A mitochondrion-targeting transit peptide spans 1 to 12 (MSASIARATVRA). Fe cation contacts are provided by C57, C121, and C123.

This sequence belongs to the HesB/IscA family.

Its subcellular location is the mitochondrion. In terms of biological role, involved in the maturation of mitochondrial 4Fe-4S proteins functioning late in the iron-sulfur cluster assembly pathway. Probably involved in the binding of an intermediate of Fe/S cluster assembly. The sequence is that of Iron-sulfur cluster assembly 1 homolog, mitochondrial (isca1) from Danio rerio (Zebrafish).